Here is a 263-residue protein sequence, read N- to C-terminus: tRNA dimethylallyltransferase (263 aa).

This sequence belongs to the IPP transferase family. In terms of assembly, monomer. Mg(2+) is required as a cofactor.

It catalyses the reaction adenosine(37) in tRNA + dimethylallyl diphosphate = N(6)-dimethylallyladenosine(37) in tRNA + diphosphate. Its function is as follows. Catalyzes the transfer of a dimethylallyl group onto the adenine at position 37 in tRNAs that read codons beginning with uridine, leading to the formation of N6-(dimethylallyl)adenosine (i(6)A). The sequence is that of tRNA dimethylallyltransferase from Leifsonia xyli subsp. xyli (strain CTCB07).